The sequence spans 456 residues: UDP-glycosyltransferase 84B1 (456 aa).

UDP-alpha-D-glucose is bound by residues serine 278, 332-334 (SPQ), 349-357 (HCGWNSTME), and 371-374 (WTDQ).

It belongs to the UDP-glycosyltransferase family.

Possesses low quercetin 7-O-glucosyltransferase activity in vitro. The polypeptide is UDP-glycosyltransferase 84B1 (UGT84B1) (Arabidopsis thaliana (Mouse-ear cress)).